The chain runs to 141 residues: 3-hydroxyacyl-[acyl-carrier-protein] dehydratase FabZ (141 aa).

His-48 is a catalytic residue.

Belongs to the thioester dehydratase family. FabZ subfamily.

The protein localises to the cytoplasm. It catalyses the reaction a (3R)-hydroxyacyl-[ACP] = a (2E)-enoyl-[ACP] + H2O. Involved in unsaturated fatty acids biosynthesis. Catalyzes the dehydration of short chain beta-hydroxyacyl-ACPs and long chain saturated and unsaturated beta-hydroxyacyl-ACPs. This is 3-hydroxyacyl-[acyl-carrier-protein] dehydratase FabZ from Herpetosiphon aurantiacus (strain ATCC 23779 / DSM 785 / 114-95).